The chain runs to 117 residues: Fluoride-specific ion channel FluC 2 (117 aa).

2 consecutive transmembrane segments (helical) span residues 1 to 21 (MISI…RSAI) and 46 to 66 (FLIG…AFFV). Residues glycine 71 and threonine 74 each coordinate Na(+). A helical transmembrane segment spans residues 95–115 (LFLNYSLLQFIIGFIACYIGY).

This sequence belongs to the fluoride channel Fluc/FEX (TC 1.A.43) family.

It localises to the cell membrane. It catalyses the reaction fluoride(in) = fluoride(out). With respect to regulation, na(+) is not transported, but it plays an essential structural role and its presence is essential for fluoride channel function. In terms of biological role, fluoride-specific ion channel. Important for reducing fluoride concentration in the cell, thus reducing its toxicity. This is Fluoride-specific ion channel FluC 2 from Staphylococcus aureus (strain Mu50 / ATCC 700699).